Reading from the N-terminus, the 325-residue chain is Tetraacyldisaccharide 4'-kinase (325 aa).

ATP is bound at residue 58–65; that stretch reads TVGGSGKT.

It belongs to the LpxK family.

The enzyme catalyses a lipid A disaccharide + ATP = a lipid IVA + ADP + H(+). Its pathway is glycolipid biosynthesis; lipid IV(A) biosynthesis; lipid IV(A) from (3R)-3-hydroxytetradecanoyl-[acyl-carrier-protein] and UDP-N-acetyl-alpha-D-glucosamine: step 6/6. Its function is as follows. Transfers the gamma-phosphate of ATP to the 4'-position of a tetraacyldisaccharide 1-phosphate intermediate (termed DS-1-P) to form tetraacyldisaccharide 1,4'-bis-phosphate (lipid IVA). This Coxiella burnetii (strain RSA 331 / Henzerling II) protein is Tetraacyldisaccharide 4'-kinase.